The chain runs to 270 residues: 4-hydroxy-tetrahydrodipicolinate reductase (270 aa).

NAD(+)-binding positions include 11-16 and glutamate 37; that span reads GCQGRM. Arginine 38 lines the NADP(+) pocket. Residues 101–103 and 125–128 each bind NAD(+); these read GTT and ASNF. The active-site Proton donor/acceptor is histidine 158. Histidine 159 is a (S)-2,3,4,5-tetrahydrodipicolinate binding site. The active-site Proton donor is the lysine 162. (S)-2,3,4,5-tetrahydrodipicolinate is bound at residue 168-169; the sequence is GT.

The protein belongs to the DapB family.

It localises to the cytoplasm. The catalysed reaction is (S)-2,3,4,5-tetrahydrodipicolinate + NAD(+) + H2O = (2S,4S)-4-hydroxy-2,3,4,5-tetrahydrodipicolinate + NADH + H(+). It catalyses the reaction (S)-2,3,4,5-tetrahydrodipicolinate + NADP(+) + H2O = (2S,4S)-4-hydroxy-2,3,4,5-tetrahydrodipicolinate + NADPH + H(+). The protein operates within amino-acid biosynthesis; L-lysine biosynthesis via DAP pathway; (S)-tetrahydrodipicolinate from L-aspartate: step 4/4. Catalyzes the conversion of 4-hydroxy-tetrahydrodipicolinate (HTPA) to tetrahydrodipicolinate. This chain is 4-hydroxy-tetrahydrodipicolinate reductase, found in Tolumonas auensis (strain DSM 9187 / NBRC 110442 / TA 4).